The chain runs to 559 residues: Probable 2-ketoarginine decarboxylase AruI (559 aa).

A thiamine diphosphate-binding site is contributed by glutamate 76.

This sequence belongs to the TPP enzyme family. Thiamine diphosphate serves as cofactor.

It catalyses the reaction 5-guanidino-2-oxopentanoate + H(+) = 4-guanidinobutanal + CO2. It participates in amino-acid degradation; L-arginine degradation. Catalyzes the decarboxylation of 2-ketoarginine, leading to the formation of 4-guanidinobutyraldehyde. The polypeptide is Probable 2-ketoarginine decarboxylase AruI (aruI) (Pseudomonas aeruginosa (strain ATCC 15692 / DSM 22644 / CIP 104116 / JCM 14847 / LMG 12228 / 1C / PRS 101 / PAO1)).